A 306-amino-acid polypeptide reads, in one-letter code: Ribonuclease BN (306 aa).

Zn(2+) is bound by residues His-64, His-66, Asp-68, His-69, His-141, Asp-212, and His-270. Catalysis depends on Asp-68, which acts as the Proton acceptor.

The protein belongs to the RNase Z family. RNase BN subfamily. In terms of assembly, homodimer. It depends on Zn(2+) as a cofactor.

In terms of biological role, zinc phosphodiesterase, which has both exoribonuclease and endoribonuclease activities. The polypeptide is Ribonuclease BN (Klebsiella pneumoniae subsp. pneumoniae (strain ATCC 700721 / MGH 78578)).